The chain runs to 345 residues: L-threonine 3-dehydrogenase (345 aa).

Position 42 (Cys-42) interacts with Zn(2+). Residues Thr-44 and His-47 each act as charge relay system in the active site. His-67, Glu-68, Cys-97, Cys-100, Cys-103, and Cys-111 together coordinate Zn(2+). Residues Ile-179, Asp-199, Arg-204, Leu-266–Ile-268, and Ile-290–Tyr-291 each bind NAD(+).

It belongs to the zinc-containing alcohol dehydrogenase family. Homotetramer. It depends on Zn(2+) as a cofactor.

The protein localises to the cytoplasm. The catalysed reaction is L-threonine + NAD(+) = (2S)-2-amino-3-oxobutanoate + NADH + H(+). Its pathway is amino-acid degradation; L-threonine degradation via oxydo-reductase pathway; glycine from L-threonine: step 1/2. Functionally, catalyzes the NAD(+)-dependent oxidation of L-threonine to 2-amino-3-ketobutyrate. This is L-threonine 3-dehydrogenase from Rhizobium rhizogenes (strain K84 / ATCC BAA-868) (Agrobacterium radiobacter).